Consider the following 256-residue polypeptide: 5-keto-4-deoxy-D-glucarate aldolase (256 aa).

H50 (proton acceptor) is an active-site residue. A substrate-binding site is contributed by Q151. Residue E153 coordinates Mg(2+). The substrate site is built by S178 and D179. A Mg(2+)-binding site is contributed by D179.

The protein belongs to the HpcH/HpaI aldolase family. KDGluc aldolase subfamily. In terms of assembly, homohexamer; trimer of dimers. Mg(2+) serves as cofactor.

It catalyses the reaction 5-dehydro-4-deoxy-D-glucarate = 2-hydroxy-3-oxopropanoate + pyruvate. The enzyme catalyses 2-dehydro-3-deoxy-D-glucarate = 2-hydroxy-3-oxopropanoate + pyruvate. It functions in the pathway carbohydrate acid metabolism; galactarate degradation; D-glycerate from galactarate: step 2/3. In terms of biological role, catalyzes the reversible retro-aldol cleavage of both 5-keto-4-deoxy-D-glucarate and 2-keto-3-deoxy-D-glucarate to pyruvate and tartronic semialdehyde. This chain is 5-keto-4-deoxy-D-glucarate aldolase, found in Salmonella paratyphi C (strain RKS4594).